The chain runs to 247 residues: E3 ubiquitin-protein ligase RNF182 (247 aa).

The segment at 20 to 68 (CKICYNRYNLKQRKPKVLECCHRVCAKCLYKIIDFGDSPQGVIVCPFCR) adopts an RING-type zinc-finger fold. Transmembrane regions (helical) follow at residues 184–204 (VLVW…IYLL) and 211–231 (LGVV…VYGF).

In terms of assembly, interacts with ATP6V0C.

The protein localises to the membrane. It is found in the cytoplasm. The catalysed reaction is S-ubiquitinyl-[E2 ubiquitin-conjugating enzyme]-L-cysteine + [acceptor protein]-L-lysine = [E2 ubiquitin-conjugating enzyme]-L-cysteine + N(6)-ubiquitinyl-[acceptor protein]-L-lysine.. It functions in the pathway protein modification; protein ubiquitination. Functionally, E3 ubiquitin-protein ligase that mediates the ubiquitination of ATP6V0C and targets it to degradation via the ubiquitin-proteasome pathway. Also plays a role in the inhibition of TLR-triggered innate immune response by mediating 'Lys'-48-linked ubiquitination and subsequent degradation of NF-kappa-B component RELA. This chain is E3 ubiquitin-protein ligase RNF182 (Rnf182), found in Rattus norvegicus (Rat).